Here is a 591-residue protein sequence, read N- to C-terminus: Ketol-acid reductoisomerase, chloroplastic (591 aa).

A disordered region spans residues 1–20; sequence MAAATSSIAPSLSCPSPSSS. Residues 1-52 constitute a chloroplast transit peptide; it reads MAAATSSIAPSLSCPSPSSSSKTLWSSKARTLALPNIGFLSSSSKSLRSLTA. The residue at position 53 (Thr53) is an N-acetylthreonine. The 199-residue stretch at 102–300 folds into the KARI N-terminal Rossmann domain; sequence VRGGRDLFKH…ALGSPFTFAT (199 aa). NADP(+) is bound by residues 123–130, 156–161, and 195–199; these read GVIGWGSQ, RKGSRS, and SDAAQ. His220 is an active-site residue. KARI C-terminal knotted domains lie at 301–449 and 450–586; these read TLEQ…RPAG and DLGP…RPEL. Residues Asp309, Glu313, Glu486, and Glu490 each coordinate Mg(2+). Position 512 (Ser512) interacts with substrate.

The protein belongs to the ketol-acid reductoisomerase family. Homodimer. Requires Mg(2+) as cofactor.

The protein localises to the plastid. The protein resides in the chloroplast. It catalyses the reaction (2R)-2,3-dihydroxy-3-methylbutanoate + NADP(+) = (2S)-2-acetolactate + NADPH + H(+). The enzyme catalyses (2R,3R)-2,3-dihydroxy-3-methylpentanoate + NADP(+) = (S)-2-ethyl-2-hydroxy-3-oxobutanoate + NADPH + H(+). Its pathway is amino-acid biosynthesis; L-isoleucine biosynthesis; L-isoleucine from 2-oxobutanoate: step 2/4. It functions in the pathway amino-acid biosynthesis; L-valine biosynthesis; L-valine from pyruvate: step 2/4. This is Ketol-acid reductoisomerase, chloroplastic from Arabidopsis thaliana (Mouse-ear cress).